A 400-amino-acid chain; its full sequence is Cysteine desulfurase 1 (400 aa).

Residues 71 to 72 (GT), N150, Q178, and 198 to 200 (SGH) contribute to the pyridoxal 5'-phosphate site. K201 carries the N6-(pyridoxal phosphate)lysine modification. T236 serves as a coordination point for pyridoxal 5'-phosphate. The Cysteine persulfide intermediate role is filled by C324. C324 is a binding site for [2Fe-2S] cluster.

Belongs to the class-V pyridoxal-phosphate-dependent aminotransferase family. NifS/IscS subfamily. As to quaternary structure, homodimer. It depends on pyridoxal 5'-phosphate as a cofactor.

The catalysed reaction is (sulfur carrier)-H + L-cysteine = (sulfur carrier)-SH + L-alanine. Its function is as follows. Catalyzes the removal of elemental sulfur atoms from cysteine to produce alanine. Seems to participate in the biosynthesis of the nitrogenase metalloclusters by providing the inorganic sulfur required for the Fe-S core formation. This Trichormus variabilis (strain ATCC 29413 / PCC 7937) (Anabaena variabilis) protein is Cysteine desulfurase 1.